The chain runs to 227 residues: Cytochrome c oxidase subunit 2 (227 aa).

Residues 1–14 (MAYPLQLGLQDATS) are Mitochondrial intermembrane-facing. The helical transmembrane segment at 15-45 (PIMEELMNFHDHTLMIVFLISSLVLYVISSM) threads the bilayer. The Mitochondrial matrix portion of the chain corresponds to 46-59 (LTTKLTHTSTMDAQ). A helical transmembrane segment spans residues 60–87 (EVETIWTILPAVILIMIALPSLRILYMM). Residues 88–227 (DEINNPVLTV…NFETWSVSMI (140 aa)) are Mitochondrial intermembrane-facing. Cu cation is bound by residues histidine 161, cysteine 196, glutamate 198, cysteine 200, histidine 204, and methionine 207. Glutamate 198 provides a ligand contact to Mg(2+).

This sequence belongs to the cytochrome c oxidase subunit 2 family. Component of the cytochrome c oxidase (complex IV, CIV), a multisubunit enzyme composed of 14 subunits. The complex is composed of a catalytic core of 3 subunits MT-CO1, MT-CO2 and MT-CO3, encoded in the mitochondrial DNA, and 11 supernumerary subunits COX4I, COX5A, COX5B, COX6A, COX6B, COX6C, COX7A, COX7B, COX7C, COX8 and NDUFA4, which are encoded in the nuclear genome. The complex exists as a monomer or a dimer and forms supercomplexes (SCs) in the inner mitochondrial membrane with NADH-ubiquinone oxidoreductase (complex I, CI) and ubiquinol-cytochrome c oxidoreductase (cytochrome b-c1 complex, complex III, CIII), resulting in different assemblies (supercomplex SCI(1)III(2)IV(1) and megacomplex MCI(2)III(2)IV(2)). Found in a complex with TMEM177, COA6, COX18, COX20, SCO1 and SCO2. Interacts with TMEM177 in a COX20-dependent manner. Interacts with COX20. Interacts with COX16. Cu cation serves as cofactor.

The protein resides in the mitochondrion inner membrane. The catalysed reaction is 4 Fe(II)-[cytochrome c] + O2 + 8 H(+)(in) = 4 Fe(III)-[cytochrome c] + 2 H2O + 4 H(+)(out). Its function is as follows. Component of the cytochrome c oxidase, the last enzyme in the mitochondrial electron transport chain which drives oxidative phosphorylation. The respiratory chain contains 3 multisubunit complexes succinate dehydrogenase (complex II, CII), ubiquinol-cytochrome c oxidoreductase (cytochrome b-c1 complex, complex III, CIII) and cytochrome c oxidase (complex IV, CIV), that cooperate to transfer electrons derived from NADH and succinate to molecular oxygen, creating an electrochemical gradient over the inner membrane that drives transmembrane transport and the ATP synthase. Cytochrome c oxidase is the component of the respiratory chain that catalyzes the reduction of oxygen to water. Electrons originating from reduced cytochrome c in the intermembrane space (IMS) are transferred via the dinuclear copper A center (CU(A)) of subunit 2 and heme A of subunit 1 to the active site in subunit 1, a binuclear center (BNC) formed by heme A3 and copper B (CU(B)). The BNC reduces molecular oxygen to 2 water molecules using 4 electrons from cytochrome c in the IMS and 4 protons from the mitochondrial matrix. In Malacothrix typica (Long-eared mouse), this protein is Cytochrome c oxidase subunit 2 (MT-CO2).